Reading from the N-terminus, the 625-residue chain is Glutamyl-tRNA(Gln) amidotransferase subunit E (625 aa).

Belongs to the GatB/GatE family. GatE subfamily. Heterodimer of GatD and GatE.

It catalyses the reaction L-glutamyl-tRNA(Gln) + L-glutamine + ATP + H2O = L-glutaminyl-tRNA(Gln) + L-glutamate + ADP + phosphate + H(+). Its function is as follows. Allows the formation of correctly charged Gln-tRNA(Gln) through the transamidation of misacylated Glu-tRNA(Gln) in organisms which lack glutaminyl-tRNA synthetase. The reaction takes place in the presence of glutamine and ATP through an activated gamma-phospho-Glu-tRNA(Gln). The GatDE system is specific for glutamate and does not act on aspartate. This Caldivirga maquilingensis (strain ATCC 700844 / DSM 13496 / JCM 10307 / IC-167) protein is Glutamyl-tRNA(Gln) amidotransferase subunit E.